The following is a 458-amino-acid chain: 5-hydroxytryptamine receptor 2C (458 aa).

A signal peptide spans 1 to 32 (MVNLRNAVHSFLVHLIGLLVWQSDISVSPVAA). Over 33–55 (IVTDIFNTSDGGRFKFPDGVQNW) the chain is Extracellular. The N-linked (GlcNAc...) asparagine glycan is linked to Asn39. A helical membrane pass occupies residues 56–80 (PALSIVIIIIMTIGGNILVIMAVSM). Residues 81–86 (EKKLHN) lie on the Cytoplasmic side of the membrane. A helical membrane pass occupies residues 87 to 111 (ATNYFLMSLAIADMLVGLLVMPLSL). Residues 112 to 128 (LAILYDYVWPLPRYLCP) lie on the Extracellular side of the membrane. The cysteines at positions 127 and 207 are disulfide-linked. The helical transmembrane segment at 129 to 151 (VWISLDVLFSTASIMHLCAISLD) threads the bilayer. Thr139 is an ergotamine binding site. Positions 151-153 (DRY) match the DRY motif; important for ligand-induced conformation changes motif. At 152–167 (RYVAIRNPIEHSRFNS) the chain is on the cytoplasmic side. Residues 168 to 189 (RTKAIMKIAIVWAISIGVSVPI) form a helical membrane-spanning segment. Over 190-213 (PVIGLRDEEKVFVNNTTCVLNDPN) the chain is Extracellular. Asn204 is a glycosylation site (N-linked (GlcNAc...) asparagine). Residue Leu209 participates in ergotamine binding. A helical transmembrane segment spans residues 214–236 (FVLIGSFVAFFIPLTIMVITYCL). Residues 237 to 311 (TIYVLRRQAL…AINNERKASK (75 aa)) lie on the Cytoplasmic side of the membrane. Positions 274 to 301 (EENSANPNQDQNARRRKKKERRPRGTMQ) are disordered. Residues 287–297 (RRRKKKERRPR) show a composition bias toward basic residues. Residues 312–336 (VLGIVFFVFLIMWCPFFITNILSVL) traverse the membrane as a helical segment. Residues Cys337 and Cys341 are joined by a disulfide bond. Over 337 to 347 (CEKSCNQKLME) the chain is Extracellular. The chain crosses the membrane as a helical span at residues 348–370 (KLLNVFVWIGYVCSGINPLVYTL). The short motif at 364–368 (NPLVY) is the NPxxY motif; important for ligand-induced conformation changes and signaling element. At 371–458 (FNKIYRRAFS…SVVSERISSV (88 aa)) the chain is on the cytoplasmic side. The short motif at 456-458 (SSV) is the PDZ-binding element.

Belongs to the G-protein coupled receptor 1 family. As to quaternary structure, interacts with MPDZ. Interacts with ARRB2. Interacts with MPP3; this interaction stabilizes the receptor at the plasma membrane and prevents the desensitization of the HTR2C receptor-mediated calcium response. In terms of processing, N-glycosylated. In terms of tissue distribution, detected in brain.

It localises to the cell membrane. With respect to regulation, inhibited by inverse agonist ritanserin. G-protein coupled receptor for 5-hydroxytryptamine (serotonin). Also functions as a receptor for various drugs and psychoactive substances, including ergot alkaloid derivatives, 1-2,5,-dimethoxy-4-iodophenyl-2-aminopropane (DOI) and lysergic acid diethylamide (LSD). Ligand binding causes a conformation change that triggers signaling via guanine nucleotide-binding proteins (G proteins) and modulates the activity of downstream effectors. HTR2C is coupled to G(q)/G(11) G alpha proteins and activates phospholipase C-beta, releasing diacylglycerol (DAG) and inositol 1,4,5-trisphosphate (IP3) second messengers that modulate the activity of phosphatidylinositol 3-kinase and promote the release of Ca(2+) ions from intracellular stores, respectively. Beta-arrestin family members inhibit signaling via G proteins and mediate activation of alternative signaling pathways. Regulates neuronal activity via the activation of short transient receptor potential calcium channels in the brain, and thereby modulates the activation of pro-opiomelanocortin neurons and the release of CRH that then regulates the release of corticosterone. Plays a role in the regulation of appetite and eating behavior, responses to anxiogenic stimuli and stress. Plays a role in insulin sensitivity and glucose homeostasis. The chain is 5-hydroxytryptamine receptor 2C from Homo sapiens (Human).